Here is a 1339-residue protein sequence, read N- to C-terminus: DNA polymerase alpha catalytic subunit (1339 aa).

Disordered stretches follow at residues 1-90 and 177-203; these read MSGG…SMSD and NVERDQSAKPPRPRPTPGAGGGAGYRN. A compositionally biased stretch (basic and acidic residues) spans 27–36; that stretch reads DQWRSLREEV. The segment covering 79-89 has biased composition (polar residues); sequence PKQQTLAQSMS. Residues Cys-1179, Cys-1182, Cys-1213, Cys-1216, Cys-1233, Cys-1243, Cys-1271, and Cys-1286 each coordinate Zn(2+). Residues 1179-1216 form a CysA-type zinc finger; sequence CTHCRLMTPINPHTRVMEVLADQERQRDRFDLYVCVSC. Positions 1243 to 1271 match the CysB motif motif; that stretch reads CGSAAAVKAVRTQFTYYRALFDVPHAPGC.

It belongs to the DNA polymerase type-B family.

Its subcellular location is the nucleus. The catalysed reaction is DNA(n) + a 2'-deoxyribonucleoside 5'-triphosphate = DNA(n+1) + diphosphate. In terms of biological role, polymerase alpha in a complex with DNA primase is a replicative polymerase. The polypeptide is DNA polymerase alpha catalytic subunit (Leishmania donovani).